The chain runs to 165 residues: 6,7-dimethyl-8-ribityllumazine synthase (165 aa).

Residues phenylalanine 22, 56 to 58 (SME), and 80 to 82 (AVI) each bind 5-amino-6-(D-ribitylamino)uracil. 85–86 (ET) serves as a coordination point for (2S)-2-hydroxy-3-oxobutyl phosphate. Histidine 88 serves as the catalytic Proton donor. Phenylalanine 113 serves as a coordination point for 5-amino-6-(D-ribitylamino)uracil. Arginine 127 contributes to the (2S)-2-hydroxy-3-oxobutyl phosphate binding site.

This sequence belongs to the DMRL synthase family.

The catalysed reaction is (2S)-2-hydroxy-3-oxobutyl phosphate + 5-amino-6-(D-ribitylamino)uracil = 6,7-dimethyl-8-(1-D-ribityl)lumazine + phosphate + 2 H2O + H(+). It functions in the pathway cofactor biosynthesis; riboflavin biosynthesis; riboflavin from 2-hydroxy-3-oxobutyl phosphate and 5-amino-6-(D-ribitylamino)uracil: step 1/2. Its function is as follows. Catalyzes the formation of 6,7-dimethyl-8-ribityllumazine by condensation of 5-amino-6-(D-ribitylamino)uracil with 3,4-dihydroxy-2-butanone 4-phosphate. This is the penultimate step in the biosynthesis of riboflavin. The chain is 6,7-dimethyl-8-ribityllumazine synthase from Thermotoga sp. (strain RQ2).